We begin with the raw amino-acid sequence, 295 residues long: 4-hydroxy-tetrahydrodipicolinate synthase (295 aa).

Thr-47 is a binding site for pyruvate. Tyr-135 serves as the catalytic Proton donor/acceptor. Lys-163 functions as the Schiff-base intermediate with substrate in the catalytic mechanism. Ile-204 provides a ligand contact to pyruvate.

Belongs to the DapA family. As to quaternary structure, homotetramer; dimer of dimers.

Its subcellular location is the cytoplasm. It catalyses the reaction L-aspartate 4-semialdehyde + pyruvate = (2S,4S)-4-hydroxy-2,3,4,5-tetrahydrodipicolinate + H2O + H(+). The protein operates within amino-acid biosynthesis; L-lysine biosynthesis via DAP pathway; (S)-tetrahydrodipicolinate from L-aspartate: step 3/4. In terms of biological role, catalyzes the condensation of (S)-aspartate-beta-semialdehyde [(S)-ASA] and pyruvate to 4-hydroxy-tetrahydrodipicolinate (HTPA). This Caldicellulosiruptor saccharolyticus (strain ATCC 43494 / DSM 8903 / Tp8T 6331) protein is 4-hydroxy-tetrahydrodipicolinate synthase.